A 152-amino-acid chain; its full sequence is Regulatory protein RecX (152 aa).

The protein belongs to the RecX family.

It localises to the cytoplasm. Modulates RecA activity. In Haemophilus influenzae (strain 86-028NP), this protein is Regulatory protein RecX.